The following is a 280-amino-acid chain: UDP-3-O-acyl-N-acetylglucosamine deacetylase (280 aa).

Positions 79, 237, and 241 each coordinate Zn(2+). The active-site Proton donor is His264.

Belongs to the LpxC family. Requires Zn(2+) as cofactor.

It catalyses the reaction a UDP-3-O-[(3R)-3-hydroxyacyl]-N-acetyl-alpha-D-glucosamine + H2O = a UDP-3-O-[(3R)-3-hydroxyacyl]-alpha-D-glucosamine + acetate. It participates in glycolipid biosynthesis; lipid IV(A) biosynthesis; lipid IV(A) from (3R)-3-hydroxytetradecanoyl-[acyl-carrier-protein] and UDP-N-acetyl-alpha-D-glucosamine: step 2/6. In terms of biological role, catalyzes the hydrolysis of UDP-3-O-myristoyl-N-acetylglucosamine to form UDP-3-O-myristoylglucosamine and acetate, the committed step in lipid A biosynthesis. In Chlamydia felis (strain Fe/C-56) (Chlamydophila felis), this protein is UDP-3-O-acyl-N-acetylglucosamine deacetylase.